The chain runs to 693 residues: ATP-dependent DNA helicase RecG (693 aa).

The tract at residues 48–146 (THLYPIGELL…GDLSTPELQE (99 aa)) is wedge domain. In terms of domain architecture, Helicase ATP-binding spans 283-448 (DMALDVPMMR…AYADLDTSVI (166 aa)). 296-303 (GDVGSGKT) contacts ATP. A DEAH box motif is present at residues 397-400 (DEQH). One can recognise a Helicase C-terminal domain in the interval 482 to 628 (EGRQAYWVCT…GFVIAQKDLE (147 aa)).

The protein belongs to the helicase family. RecG subfamily. Monomer in solution. Probably a monomer on HJ DNA. Binding to fork DNA is facilitated by SSB; the proteins do not seem to stably associate. Requires Mg(2+) as cofactor.

The enzyme catalyses Couples ATP hydrolysis with the unwinding of duplex DNA by translocating in the 3'-5' direction.. It catalyses the reaction ATP + H2O = ADP + phosphate + H(+). Plays a critical role in recombination and DNA repair. Helps process Holliday junction (HJ) intermediates to mature products by catalyzing branch migration. Has replication fork regression activity, unwinds stalled or blocked replication forks to make a HJ that can be resolved by RuvC or RusA. Also rewinds unwound dsDNA in an ATP-dependent manner. Has double-stranded (ds)DNA unwinding activity characteristic of a DNA helicase with 3'-5' polarity in vitro on linear dsDNA; branched duplex DNA (Y-DNA) substrates adopt different conformations that influence which of the two arms are unwound. Binds and unwinds HJ and Y-DNA but not linear duplex DNA; binds no more than 10 nucleotides of ssDNA at a fork. Has a role in constitutive stable DNA replication (cSDR, DNA replication in the absence of protein synthesis) and R-loop (RNA annealed with dsDNA) formation. Unwinds R-loops but not RNA:DNA hybrids. Is genetically synergistic to RadA and RuvABC. This chain is ATP-dependent DNA helicase RecG, found in Escherichia coli (strain K12).